The chain runs to 119 residues: Integration host factor subunit beta (119 aa).

The tract at residues 93-119 (AGGLADTQPDGDAPDQPQPTLLGLHAM) is disordered. Residues 97–112 (ADTQPDGDAPDQPQPT) show a composition bias toward low complexity.

This sequence belongs to the bacterial histone-like protein family. Heterodimer of an alpha and a beta chain.

Functionally, this protein is one of the two subunits of integration host factor, a specific DNA-binding protein that functions in genetic recombination as well as in transcriptional and translational control. The polypeptide is Integration host factor subunit beta (Bordetella petrii (strain ATCC BAA-461 / DSM 12804 / CCUG 43448)).